The sequence spans 132 residues: Regulator of ribonuclease activity B (132 aa).

Belongs to the RraB family. Interacts with the C-terminal region of Rne.

Its subcellular location is the cytoplasm. Globally modulates RNA abundance by binding to RNase E (Rne) and regulating its endonucleolytic activity. Can modulate Rne action in a substrate-dependent manner by altering the composition of the degradosome. This Alteromonas mediterranea (strain DSM 17117 / CIP 110805 / LMG 28347 / Deep ecotype) protein is Regulator of ribonuclease activity B.